The chain runs to 255 residues: Anamorsin homolog (255 aa).

The N-terminal SAM-like domain stretch occupies residues 1-163; it reads MPKETLVVSK…VRPNWKSKTD (163 aa). A linker region spans residues 164-185; that stretch reads KKSPSMIDAAPIDGYISKAPDY. Positions 188, 195, 198, and 200 each coordinate [2Fe-2S] cluster. Residues 188–200 are fe-S binding site A; that stretch reads CSTKPRACANCTC. [4Fe-4S] cluster-binding residues include Cys-224, Cys-227, Cys-235, and Cys-238. 2 short sequence motifs (cx2C motif) span residues 224–227 and 235–238; these read CGNC and CESC. A fe-S binding site B region spans residues 224–238; the sequence is CGNCYLGDAFRCESC.

It belongs to the anamorsin family. In terms of assembly, monomer. The cofactor is [2Fe-2S] cluster. [4Fe-4S] cluster serves as cofactor.

The protein localises to the cytoplasm. It is found in the mitochondrion intermembrane space. Functionally, component of the cytosolic iron-sulfur (Fe-S) protein assembly (CIA) machinery. Required for the maturation of extramitochondrial Fe-S proteins. Part of an electron transfer chain functioning in an early step of cytosolic Fe-S biogenesis, facilitating the de novo assembly of a [4Fe-4S] cluster on the cytosolic Fe-S scaffold complex. Electrons are transferred from NADPH via a FAD- and FMN-containing diflavin oxidoreductase. Together with the diflavin oxidoreductase, also required for the assembly of the diferric tyrosyl radical cofactor of ribonucleotide reductase (RNR), probably by providing electrons for reduction during radical cofactor maturation in the catalytic small subunit. The chain is Anamorsin homolog from Theileria annulata.